A 512-amino-acid chain; its full sequence is ATP synthase subunit alpha (512 aa).

169-176 (GDRKTGKT) contacts ATP.

This sequence belongs to the ATPase alpha/beta chains family. As to quaternary structure, F-type ATPases have 2 components, CF(1) - the catalytic core - and CF(0) - the membrane proton channel. CF(1) has five subunits: alpha(3), beta(3), gamma(1), delta(1), epsilon(1). CF(0) has three main subunits: a(1), b(2) and c(9-12). The alpha and beta chains form an alternating ring which encloses part of the gamma chain. CF(1) is attached to CF(0) by a central stalk formed by the gamma and epsilon chains, while a peripheral stalk is formed by the delta and b chains.

The protein resides in the cell membrane. The catalysed reaction is ATP + H2O + 4 H(+)(in) = ADP + phosphate + 5 H(+)(out). Functionally, produces ATP from ADP in the presence of a proton gradient across the membrane. The alpha chain is a regulatory subunit. The sequence is that of ATP synthase subunit alpha from Limosilactobacillus fermentum (strain NBRC 3956 / LMG 18251) (Lactobacillus fermentum).